A 120-amino-acid polypeptide reads, in one-letter code: MFLLSGYEYFLGFLLIAAAVPILALVTNLIVAPKGRNGERKLTYESGMEPIGGAWIQFNIRYYMFALVFVIFDVETVFLYPWAVAFNRLGLLAFIEALIFIAILVIALAYAWRKGALEWS.

A run of 3 helical transmembrane segments spans residues 10–30 (FLGFLLIAAAVPILALVTNLI), 64–84 (MFALVFVIFDVETVFLYPWAV), and 89–109 (LGLLAFIEALIFIAILVIALA).

The protein belongs to the complex I subunit 3 family. NDH-1 can be composed of about 15 different subunits; different subcomplexes with different compositions have been identified which probably have different functions.

The protein localises to the cellular thylakoid membrane. It catalyses the reaction a plastoquinone + NADH + (n+1) H(+)(in) = a plastoquinol + NAD(+) + n H(+)(out). The enzyme catalyses a plastoquinone + NADPH + (n+1) H(+)(in) = a plastoquinol + NADP(+) + n H(+)(out). Functionally, NDH-1 shuttles electrons from an unknown electron donor, via FMN and iron-sulfur (Fe-S) centers, to quinones in the respiratory and/or the photosynthetic chain. The immediate electron acceptor for the enzyme in this species is believed to be plastoquinone. Couples the redox reaction to proton translocation, and thus conserves the redox energy in a proton gradient. Cyanobacterial NDH-1 also plays a role in inorganic carbon-concentration. In Prochlorococcus marinus (strain MIT 9215), this protein is NAD(P)H-quinone oxidoreductase subunit 3.